Here is a 46-residue protein sequence, read N- to C-terminus: Viscotoxin-A2 (46 aa).

3 disulfides stabilise this stretch: Cys-3-Cys-40, Cys-4-Cys-32, and Cys-16-Cys-26.

The protein belongs to the plant thionin (TC 1.C.44) family.

The protein localises to the secreted. In terms of biological role, thionins are small plant proteins which are toxic to animal cells. They seem to exert their toxic effect at the level of the cell membrane. Their precise function is not known. This is Viscotoxin-A2 (THI2.3) from Viscum album (European mistletoe).